The sequence spans 900 residues: Chaperone protein ClpB 2 (900 aa).

Residues 15–154 (PDRFSDPAWE…ESLLRQPSVS (140 aa)) enclose the Clp R domain. Repeat regions lie at residues 18-81 (FSDP…LADQ) and 91-154 (IGED…PSVS). Positions 151-183 (PSVSPAPAPPPVPTAASAPAPTPRSAPAPRVMA) are disordered. The segment covering 154 to 163 (SPAPAPPPVP) has biased composition (pro residues). An NBD1 region spans residues 191-376 (ELEREPSALE…RRFQQVLIRE (186 aa)). 244-251 (GEPGVGKT) contributes to the ATP binding site. Residues 377-581 (PDLELSLEIL…IADLVARWTG (205 aa)) are linker. Residues 427–557 (IDLIDEAAAQ…LEASQAEAQS (131 aa)) are a coiled coil. The NBD2 stretch occupies residues 591–803 (ERRKLLALES…RIDEVIRFRP (213 aa)). 641–648 (GPTGVGKT) serves as a coordination point for ATP. Positions 804–900 (LKVKDLVRIV…GASLEFEPLE (97 aa)) are C-terminal.

It belongs to the ClpA/ClpB family. In terms of assembly, homohexamer. The oligomerization is ATP-dependent.

Its subcellular location is the cytoplasm. Its function is as follows. Part of a stress-induced multi-chaperone system, it is involved in the recovery of the cell from heat-induced damage, in cooperation with DnaK, DnaJ and GrpE. Acts before DnaK, in the processing of protein aggregates. Protein binding stimulates the ATPase activity; ATP hydrolysis unfolds the denatured protein aggregates, which probably helps expose new hydrophobic binding sites on the surface of ClpB-bound aggregates, contributing to the solubilization and refolding of denatured protein aggregates by DnaK. This chain is Chaperone protein ClpB 2 (clpB2), found in Parasynechococcus marenigrum (strain WH8102).